Consider the following 121-residue polypeptide: Large ribosomal subunit protein bL20 (121 aa).

Belongs to the bacterial ribosomal protein bL20 family.

Binds directly to 23S ribosomal RNA and is necessary for the in vitro assembly process of the 50S ribosomal subunit. It is not involved in the protein synthesizing functions of that subunit. This Ruegeria pomeroyi (strain ATCC 700808 / DSM 15171 / DSS-3) (Silicibacter pomeroyi) protein is Large ribosomal subunit protein bL20.